We begin with the raw amino-acid sequence, 606 residues long: NADH-ubiquinone oxidoreductase chain 5 (606 aa).

Met-1 carries the post-translational modification N-formylmethionine. The next 15 helical transmembrane spans lie at 4 to 24 (FSSLSLVTLLLLTMPIMMMSF), 43 to 63 (AFITSMIPTMMFIHSGQELII), 87 to 107 (MMFIPVALFVTWSIMEFSMWY), 117 to 137 (FFKYLLLFLITMLILVTANNL), 140 to 160 (LFIGWEGVGIMSFLLIGWWYG), 171 to 191 (AILYNRIGDIGFILAMAWFLT), 213 to 233 (LIGLALAATGKSAQFGLHPWL), 241 to 261 (TPVSALLHSSTMVVAGIFLLI), 273 to 293 (IQSITLCLGAITTLFTAMCAL), 310 to 330 (LGLMMVTIGINQPYLAFLHIC), 366 to 386 (MPFTTTALIVGSLALTGMPFL), 413 to 433 (LIATSFTAIYSTRIIFFALLG), 457 to 477 (LLIGSLFAGYIISNNIPPTTI), 482 to 502 (MPYYLKTTALIVTILGFILAL), and 582 to 602 (GLIKLYFLSFLITILISMILF).

Core subunit of respiratory chain NADH dehydrogenase (Complex I) which is composed of 45 different subunits.

The protein localises to the mitochondrion inner membrane. It carries out the reaction a ubiquinone + NADH + 5 H(+)(in) = a ubiquinol + NAD(+) + 4 H(+)(out). Core subunit of the mitochondrial membrane respiratory chain NADH dehydrogenase (Complex I) which catalyzes electron transfer from NADH through the respiratory chain, using ubiquinone as an electron acceptor. Essential for the catalytic activity and assembly of complex I. In Bos taurus (Bovine), this protein is NADH-ubiquinone oxidoreductase chain 5 (MT-ND5).